A 119-amino-acid chain; its full sequence is Holo-[acyl-carrier-protein] synthase (119 aa).

Mg(2+) contacts are provided by Asp-8 and Glu-59.

The protein belongs to the P-Pant transferase superfamily. AcpS family. Requires Mg(2+) as cofactor.

The protein resides in the cytoplasm. It catalyses the reaction apo-[ACP] + CoA = holo-[ACP] + adenosine 3',5'-bisphosphate + H(+). Transfers the 4'-phosphopantetheine moiety from coenzyme A to a Ser of acyl-carrier-protein. In Staphylococcus aureus (strain JH1), this protein is Holo-[acyl-carrier-protein] synthase.